The following is a 167-amino-acid chain: Lipoprotein signal peptidase (167 aa).

Helical transmembrane passes span 8-28 (TFLT…VVLL), 46-66 (WGHF…FGLF), 68-88 (QYKI…ALFL), and 101-121 (VALT…LLYG). Catalysis depends on residues aspartate 125 and aspartate 143. Residues 139-159 (FNLADAFISIGTLLLIGHLYF) form a helical membrane-spanning segment.

It belongs to the peptidase A8 family.

Its subcellular location is the cell inner membrane. It carries out the reaction Release of signal peptides from bacterial membrane prolipoproteins. Hydrolyzes -Xaa-Yaa-Zaa-|-(S,diacylglyceryl)Cys-, in which Xaa is hydrophobic (preferably Leu), and Yaa (Ala or Ser) and Zaa (Gly or Ala) have small, neutral side chains.. It participates in protein modification; lipoprotein biosynthesis (signal peptide cleavage). Its function is as follows. This protein specifically catalyzes the removal of signal peptides from prolipoproteins. The protein is Lipoprotein signal peptidase of Chlamydia trachomatis serovar A (strain ATCC VR-571B / DSM 19440 / HAR-13).